The primary structure comprises 325 residues: Coiled-coil domain-containing protein 130 homolog (325 aa).

Residues 156–262 (LKLENKKLDI…KLKRELIKNE (107 aa)) are a coiled coil.

This sequence belongs to the CWC16 family.

The chain is Coiled-coil domain-containing protein 130 homolog from Dictyostelium discoideum (Social amoeba).